We begin with the raw amino-acid sequence, 183 residues long: GTP cyclohydrolase 1 (183 aa).

Zn(2+)-binding residues include Cys71, His74, and Cys142.

Belongs to the GTP cyclohydrolase I family. In terms of assembly, homomer.

The enzyme catalyses GTP + H2O = 7,8-dihydroneopterin 3'-triphosphate + formate + H(+). The protein operates within cofactor biosynthesis; 7,8-dihydroneopterin triphosphate biosynthesis; 7,8-dihydroneopterin triphosphate from GTP: step 1/1. This is GTP cyclohydrolase 1 from Leptospira biflexa serovar Patoc (strain Patoc 1 / Ames).